The sequence spans 688 residues: MIOREX complex component 1 (688 aa).

Positions 1–24 are disordered; the sequence is MGLKITKGQLRTKDLNQSSSKSSQ. The N-terminal 46 residues, 1–46, are a transit peptide targeting the mitochondrion; it reads MGLKITKGQLRTKDLNQSSSKSSQSSRIGVDTCIFTRMLPRINTAI.

In terms of assembly, associates with the mitochondrial ribosome.

The protein localises to the mitochondrion. In terms of biological role, component of MIOREX complexes, large expressome-like assemblies of ribosomes with factors involved in all the steps of post-transcriptional gene expression. The chain is MIOREX complex component 1 from Saccharomyces cerevisiae (strain ATCC 204508 / S288c) (Baker's yeast).